The following is a 455-amino-acid chain: MEKWTKENVLKILPVDDESAAMITSTALAVDSSEAAKDYWISLLGDSAETIEFISDFNQKRFHSTHSGNSPSIMKNKKNVTPNNNIRQKNTATSSHPSFYIANNKQKGYDEEMYKVNPASRNKSQSNNISSHEKSSKTTKNVSPGVMTSDLIPEKKSVKHNNSSSNRIEGLADIEKAIRQIEISQNINKAERRVCNCQGRKHPLNEAAPNCLNCGKIICIVEGIGPCTFCDNPVISKAQQLELIQELKHEGSRLKQAANQKRKSKTVSSKNNFQRLQNSSLHSIFLDPKQLEQKAQEAEERKNVLLNFDRTSAQRTRIIDEAADFDPTSLASDTWASPAEKALNLVRMQKAMAKKEKKKKKVLSISLSGKKVVVDQKEASSESSDEDQDELDNLTKVEGQSHSHNPKAPVIRNLPRPIYHQDLHSSHVAVPESILNKINQKWSKVQDDDGMPSML.

Disordered regions lie at residues 64–98 (STHS…SHPS) and 118–148 (PASR…GVMT). Polar residues-rich tracts occupy residues 65-98 (THSG…SHPS) and 119-130 (ASRNKSQSNNIS). S70 is modified (phosphoserine). Residue S380 is modified to Phosphoserine.

As to quaternary structure, component of the RQT (ribosome quality control trigger) complex.

Its subcellular location is the cytoplasm. The protein resides in the cytosol. Its function is as follows. Probably functions as part of the RQC trigger (RQT) complex that activates the ribosome quality control (RQC) pathway, a pathway that degrades nascent peptide chains during problematic translation. This chain is RQC trigger complex subunit RQT4 homolog, found in Schizosaccharomyces pombe (strain 972 / ATCC 24843) (Fission yeast).